Reading from the N-terminus, the 361-residue chain is Histidinol-phosphate aminotransferase (361 aa).

Lys219 bears the N6-(pyridoxal phosphate)lysine mark.

Belongs to the class-II pyridoxal-phosphate-dependent aminotransferase family. Histidinol-phosphate aminotransferase subfamily. Homodimer. The cofactor is pyridoxal 5'-phosphate.

The catalysed reaction is L-histidinol phosphate + 2-oxoglutarate = 3-(imidazol-4-yl)-2-oxopropyl phosphate + L-glutamate. Its pathway is amino-acid biosynthesis; L-histidine biosynthesis; L-histidine from 5-phospho-alpha-D-ribose 1-diphosphate: step 7/9. In Acinetobacter baumannii (strain AB307-0294), this protein is Histidinol-phosphate aminotransferase.